Reading from the N-terminus, the 476-residue chain is Glycogen synthase (476 aa).

K15 contributes to the ADP-alpha-D-glucose binding site.

The protein belongs to the glycosyltransferase 1 family. Bacterial/plant glycogen synthase subfamily.

It carries out the reaction [(1-&gt;4)-alpha-D-glucosyl](n) + ADP-alpha-D-glucose = [(1-&gt;4)-alpha-D-glucosyl](n+1) + ADP + H(+). The protein operates within glycan biosynthesis; glycogen biosynthesis. Its function is as follows. Synthesizes alpha-1,4-glucan chains using ADP-glucose. This chain is Glycogen synthase, found in Yersinia enterocolitica serotype O:8 / biotype 1B (strain NCTC 13174 / 8081).